Reading from the N-terminus, the 259-residue chain is DNA repair protein RecO (259 aa).

This sequence belongs to the RecO family.

In terms of biological role, involved in DNA repair and RecF pathway recombination. This is DNA repair protein RecO from Rhizobium rhizogenes (strain K84 / ATCC BAA-868) (Agrobacterium radiobacter).